We begin with the raw amino-acid sequence, 119 residues long: Protein TusC (119 aa).

This sequence belongs to the DsrF/TusC family. As to quaternary structure, heterohexamer, formed by a dimer of trimers. The hexameric TusBCD complex contains 2 copies each of TusB, TusC and TusD. The TusBCD complex interacts with TusE.

The protein resides in the cytoplasm. Its function is as follows. Part of a sulfur-relay system required for 2-thiolation of 5-methylaminomethyl-2-thiouridine (mnm(5)s(2)U) at tRNA wobble positions. This chain is Protein TusC, found in Escherichia coli O8 (strain IAI1).